Consider the following 201-residue polypeptide: Ran-specific GTPase-activating protein 1 (201 aa).

Basic and acidic residues-rich tracts occupy residues 1–17 and 32–66; these read MSSE…EEAA and KKAE…IHFE. Positions 1–66 are disordered; sequence MSSEDKKPVV…APESPDIHFE (66 aa). Serine 60 is modified (phosphoserine). One can recognise a RanBD1 domain in the interval 64-200; that stretch reads HFEPVVHLEK…FEKAQEINKK (137 aa).

Belongs to the RANBP1 family. Interacts with GSP1 and PRP20.

It is found in the cytoplasm. It localises to the nucleus. Important for the export of protein containing nuclear export signal (NES) out of the nucleus. Stimulates the GTPase activity of GSP1 and GSP2. This chain is Ran-specific GTPase-activating protein 1 (YRB1), found in Saccharomyces cerevisiae (strain ATCC 204508 / S288c) (Baker's yeast).